The chain runs to 430 residues: Histidine--tRNA ligase (430 aa).

This sequence belongs to the class-II aminoacyl-tRNA synthetase family. In terms of assembly, homodimer.

It localises to the cytoplasm. It carries out the reaction tRNA(His) + L-histidine + ATP = L-histidyl-tRNA(His) + AMP + diphosphate + H(+). The protein is Histidine--tRNA ligase of Chlorobium limicola (strain DSM 245 / NBRC 103803 / 6330).